The following is a 127-amino-acid chain: Glycine cleavage system H protein (127 aa).

One can recognise a Lipoyl-binding domain in the interval 24–105 (TALAGITDFA…YGEGWLVKIK (82 aa)). The residue at position 65 (Lys65) is an N6-lipoyllysine.

This sequence belongs to the GcvH family. In terms of assembly, the glycine cleavage system is composed of four proteins: P, T, L and H. The cofactor is (R)-lipoate.

Functionally, the glycine cleavage system catalyzes the degradation of glycine. The H protein shuttles the methylamine group of glycine from the P protein to the T protein. This Chlorobium phaeobacteroides (strain DSM 266 / SMG 266 / 2430) protein is Glycine cleavage system H protein.